The chain runs to 503 residues: ATP synthase subunit alpha (503 aa).

Residue 169 to 176 (GDRQTGKT) participates in ATP binding.

This sequence belongs to the ATPase alpha/beta chains family. F-type ATPases have 2 components, CF(1) - the catalytic core - and CF(0) - the membrane proton channel. CF(1) has five subunits: alpha(3), beta(3), gamma(1), delta(1), epsilon(1). CF(0) has three main subunits: a(1), b(2) and c(9-12). The alpha and beta chains form an alternating ring which encloses part of the gamma chain. CF(1) is attached to CF(0) by a central stalk formed by the gamma and epsilon chains, while a peripheral stalk is formed by the delta and b chains.

Its subcellular location is the cell membrane. It catalyses the reaction ATP + H2O + 4 H(+)(in) = ADP + phosphate + 5 H(+)(out). Its function is as follows. Produces ATP from ADP in the presence of a proton gradient across the membrane. The alpha chain is a regulatory subunit. The polypeptide is ATP synthase subunit alpha (Macrococcus caseolyticus (strain JCSC5402) (Macrococcoides caseolyticum)).